Reading from the N-terminus, the 176-residue chain is Large ribosomal subunit protein eL6 (176 aa).

Residues 1 to 27 (MSQVAPKWYQSEDVPAPKQTRKTARPQ) form a disordered region.

The protein belongs to the eukaryotic ribosomal protein eL6 family. As to quaternary structure, component of the large ribosomal subunit. Mature ribosomes consist of a small (40S) and a large (60S) subunit. The 40S subunit contains about 32 different proteins and 1 molecule of RNA (18S). The 60S subunit contains 45 different proteins and 3 molecules of RNA (25S, 5.8S and 5S).

It localises to the cytoplasm. Its function is as follows. Component of the ribosome, a large ribonucleoprotein complex responsible for the synthesis of proteins in the cell. The small ribosomal subunit (SSU) binds messenger RNAs (mRNAs) and translates the encoded message by selecting cognate aminoacyl-transfer RNA (tRNA) molecules. The large subunit (LSU) contains the ribosomal catalytic site termed the peptidyl transferase center (PTC), which catalyzes the formation of peptide bonds, thereby polymerizing the amino acids delivered by tRNAs into a polypeptide chain. The nascent polypeptides leave the ribosome through a tunnel in the LSU and interact with protein factors that function in enzymatic processing, targeting, and the membrane insertion of nascent chains at the exit of the ribosomal tunnel. The polypeptide is Large ribosomal subunit protein eL6 (Candida albicans (strain SC5314 / ATCC MYA-2876) (Yeast)).